We begin with the raw amino-acid sequence, 254 residues long: MLQSLLLLPLFLTSAFATPHDPTAHQALEKRATFPIPSSKGSVTLRSTQYVKGTFDGGMKTYGRGVECTGQKEGGEKDAVFVVEEGGILKNVIIGADQIKGVYCKGSCTIQNVWWKDVCEDALSLKGSGSGTYKIIGGGAQNADDKVIQHNSGGTVMIQGFTVSNFGKLYRSCGNCSKQYKRSVQISGVKAYNGKTLVGINSNYGDTASIDACASSVKDICVEYEGTNNNGKEPKKKSSGPSKACEYNQPLKKC.

Residues 1-17 form the signal peptide; sequence MLQSLLLLPLFLTSAFA. An N-linked (GlcNAc...) asparagine glycan is attached at Asn175. The disordered stretch occupies residues 228–254; it reads NNNGKEPKKKSSGPSKACEYNQPLKKC.

It belongs to the polysaccharide lyase 3 family. Requires Ca(2+) as cofactor.

The protein localises to the secreted. The enzyme catalyses Eliminative cleavage of (1-&gt;4)-alpha-D-galacturonan to give oligosaccharides with 4-deoxy-alpha-D-galact-4-enuronosyl groups at their non-reducing ends.. Pectinolytic enzyme consist of four classes of enzymes: pectin lyase, polygalacturonase, pectin methylesterase and rhamnogalacturonase. Among pectinolytic enzymes, pectin lyase is the most important in depolymerization of pectin, since it cleaves internal glycosidic bonds of highly methylated pectins. Favors pectate, the anion, over pectin, the methyl ester. This Aspergillus clavatus (strain ATCC 1007 / CBS 513.65 / DSM 816 / NCTC 3887 / NRRL 1 / QM 1276 / 107) protein is Probable pectate lyase E (plyE).